Reading from the N-terminus, the 697-residue chain is Glycine--tRNA ligase beta subunit (697 aa).

This sequence belongs to the class-II aminoacyl-tRNA synthetase family. Tetramer of two alpha and two beta subunits.

The protein localises to the cytoplasm. The enzyme catalyses tRNA(Gly) + glycine + ATP = glycyl-tRNA(Gly) + AMP + diphosphate. The chain is Glycine--tRNA ligase beta subunit from Ralstonia nicotianae (strain ATCC BAA-1114 / GMI1000) (Ralstonia solanacearum).